The primary structure comprises 644 residues: Exoribonuclease 2 (644 aa).

An RNB domain is found at 190–516; that stretch reads REDLTALDFI…INHRLLKALI (327 aa). Residues 562–644 form the S1 motif domain; sequence DSRFAAEIID…ENRSVIARPV (83 aa).

Belongs to the RNR ribonuclease family. RNase II subfamily.

It localises to the cytoplasm. It carries out the reaction Exonucleolytic cleavage in the 3'- to 5'-direction to yield nucleoside 5'-phosphates.. In terms of biological role, involved in mRNA degradation. Hydrolyzes single-stranded polyribonucleotides processively in the 3' to 5' direction. This chain is Exoribonuclease 2, found in Sodalis glossinidius (strain morsitans).